A 112-amino-acid polypeptide reads, in one-letter code: Protein preY, mitochondrial (112 aa).

The N-terminal 34 residues, 1–34, are a transit peptide targeting the mitochondrion; that stretch reads MLSATCRRLAPALRRLRALSAVAGRFLQVPGARL. The 47-residue stretch at 49 to 95 folds into the TRM112 domain; that stretch reads HPALLQFLVCPLSKKPLRYEASTNELVNEELGIAYPIIDGIPNMIPQ.

The protein belongs to the PREY family. As to quaternary structure, interacts (via TRM112 domain) with NDUFAF5; the interaction is direct and stabilizes NDUFAF5 protein. Interacts with COQ5; the interaction is direct, stabilizes COQ5 protein and associates PYURF with COQ enzyme complex.

The protein resides in the mitochondrion. Its function is as follows. In mitochondria, S-adenosylmethionine-dependent methyltransferase chaperone that supports both coenzyme Q biosynthesis, by stabilizing its components, such as COQ5, and NADH:ubiquinone oxidoreductase complex (complex I, MT-ND1) assembly, by stabilizing complex I assembly factors, such as NDUFAF5. In Mus musculus (Mouse), this protein is Protein preY, mitochondrial (Pyurf).